A 64-amino-acid chain; its full sequence is Prokaryotic ubiquitin-like protein Pup (64 aa).

Residues Met-1 to Gly-11 show a composition bias toward basic and acidic residues. The segment at Met-1–Asp-37 is disordered. The tract at residues Ser-21–Tyr-58 is ARC ATPase binding. The stretch at Ala-24–Glu-52 forms a coiled coil. Gln-64 bears the Deamidated glutamine mark. Gln-64 participates in a covalent cross-link: Isoglutamyl lysine isopeptide (Gln-Lys) (interchain with K-? in acceptor proteins).

The protein belongs to the prokaryotic ubiquitin-like protein family. In terms of assembly, strongly interacts with the proteasome-associated ATPase ARC through a hydrophobic interface; the interacting region of Pup lies in its C-terminal half. There is one Pup binding site per ARC hexamer ring. Is modified by deamidation of its C-terminal glutamine to glutamate by the deamidase Dop, a prerequisite to the subsequent pupylation process.

It functions in the pathway protein degradation; proteasomal Pup-dependent pathway. Its function is as follows. Protein modifier that is covalently attached to lysine residues of substrate proteins, thereby targeting them for proteasomal degradation. The tagging system is termed pupylation. This Mycolicibacterium paratuberculosis (strain ATCC BAA-968 / K-10) (Mycobacterium paratuberculosis) protein is Prokaryotic ubiquitin-like protein Pup.